A 164-amino-acid chain; its full sequence is 6,7-dimethyl-8-ribityllumazine synthase (164 aa).

5-amino-6-(D-ribitylamino)uracil-binding positions include Y30, A61–E63, and C85–I87. (2S)-2-hydroxy-3-oxobutyl phosphate is bound at residue E90–T91. The active-site Proton donor is the H93. N118 provides a ligand contact to 5-amino-6-(D-ribitylamino)uracil. R132 is a (2S)-2-hydroxy-3-oxobutyl phosphate binding site.

This sequence belongs to the DMRL synthase family.

The enzyme catalyses (2S)-2-hydroxy-3-oxobutyl phosphate + 5-amino-6-(D-ribitylamino)uracil = 6,7-dimethyl-8-(1-D-ribityl)lumazine + phosphate + 2 H2O + H(+). It functions in the pathway cofactor biosynthesis; riboflavin biosynthesis; riboflavin from 2-hydroxy-3-oxobutyl phosphate and 5-amino-6-(D-ribitylamino)uracil: step 1/2. In terms of biological role, catalyzes the formation of 6,7-dimethyl-8-ribityllumazine by condensation of 5-amino-6-(D-ribitylamino)uracil with 3,4-dihydroxy-2-butanone 4-phosphate. This is the penultimate step in the biosynthesis of riboflavin. In Methylobacterium radiotolerans (strain ATCC 27329 / DSM 1819 / JCM 2831 / NBRC 15690 / NCIMB 10815 / 0-1), this protein is 6,7-dimethyl-8-ribityllumazine synthase.